We begin with the raw amino-acid sequence, 280 residues long: uncharacterized protein (280 aa).

2 disordered regions span residues 1 to 124 (MPRD…QREA) and 177 to 280 (LEEE…LSSK). Composition is skewed to basic residues over residues 16–36 (SRRRKHSRSPVRQRHSRRSRR) and 48–83 (YSRRKSRSISPRRHRSRSVTPKRRSPTPKRYKRQKS). Composition is skewed to basic and acidic residues over residues 102 to 124 (AKNRNGEKLKREEEERKRRQREA) and 182 to 259 (EASL…ERLK).

This is an uncharacterized protein from Arabidopsis thaliana (Mouse-ear cress).